We begin with the raw amino-acid sequence, 312 residues long: Acetyl-coenzyme A carboxylase carboxyl transferase subunit alpha (312 aa).

The region spanning L32–E286 is the CoA carboxyltransferase C-terminal domain.

It belongs to the AccA family. In terms of assembly, acetyl-CoA carboxylase is a heterohexamer composed of biotin carboxyl carrier protein (AccB), biotin carboxylase (AccC) and two subunits each of ACCase subunit alpha (AccA) and ACCase subunit beta (AccD).

Its subcellular location is the cytoplasm. The enzyme catalyses N(6)-carboxybiotinyl-L-lysyl-[protein] + acetyl-CoA = N(6)-biotinyl-L-lysyl-[protein] + malonyl-CoA. Its pathway is lipid metabolism; malonyl-CoA biosynthesis; malonyl-CoA from acetyl-CoA: step 1/1. Component of the acetyl coenzyme A carboxylase (ACC) complex. First, biotin carboxylase catalyzes the carboxylation of biotin on its carrier protein (BCCP) and then the CO(2) group is transferred by the carboxyltransferase to acetyl-CoA to form malonyl-CoA. This Thermus thermophilus (strain ATCC BAA-163 / DSM 7039 / HB27) protein is Acetyl-coenzyme A carboxylase carboxyl transferase subunit alpha.